Consider the following 114-residue polypeptide: Protein ORF3 (114 aa).

Hydrophobic regions lie at residues 6-22 (CDLG…CLCC) and 33-53 (AVVG…GLIL). An interaction with host HPX region spans residues 28 to 68 (VSRLAAVVGGAAAVPAVVSGVTGLILSPSQSPIFIQPTPSP). The interaction with the capsid protein stretch occupies residues 48–72 (VTGLILSPSQSPIFIQPTPSPPMSP). A Phosphoserine; by host modification is found at S71. Positions 72 to 114 (PLRPGLDLVFANQPDHSAPLGVTRPSAPPLPHVVDLPQLGPRR) are homodimerization, and interaction with host AMBP/bikunin. The disordered stretch occupies residues 91–114 (LGVTRPSAPPLPHVVDLPQLGPRR). The segment at 95 to 104 (RPSAPPLPHV) is interaction with host SRC, HCK, FYN, PIK3R3 and GRB2. A PTAP/PSAP motif motif is present at residues 96 to 99 (PSAP).

This sequence belongs to the hepevirus ORF3 protein family. As to quaternary structure, forms homooligomers. Interacts with host SRC, HCK, FYN, PIK3R3 and GRB2 (via SH3 domain); binding does not activate the kinases. Interacts with host AMBP/bikunin and AMBP/alpha-1-microglobulin peptides. Interacts with host HPX/hemopexin. Interacts (when phosphorylated) with capsid protein ORF2. Interacts with host TSG101; this interaction plays a role in viral release from the host cell. Interacts with host SIRPA; this interaction down-regulates the phosphorylation of host IRF3. Palmitoylated in the N-terminus.

It localises to the host endoplasmic reticulum membrane. It is found in the host cytoplasm. The protein localises to the host cytoskeleton. The protein resides in the virion. Its subcellular location is the host cell membrane. Small multifunctional phosphoprotein involved in virion morphogenesis, egress and counteracting host innate immunity. Plays critical roles in the final steps of viral release by interacting with host TSG101, a member of the vacuolar protein-sorting pathway and using other cellular host proteins involved in vesicle formation pathway. Also acts as a viroporin and forms ion conductive pores allowing viral particle release. Impairs the generation of type I interferon by down-regulating host TLR3 and TLR7 as well as their downstream signaling pathways. Down-regulates the phosphorylation of host IRF3 via the interaction with host SIRP-alpha, thereby inhibiting IFN-I expression. Interacts with host microtubules. In Homo sapiens (Human), this protein is Protein ORF3.